A 530-amino-acid polypeptide reads, in one-letter code: GMP synthase [glutamine-hydrolyzing] (530 aa).

Residues 4–205 (RILILDYGSQ…VKDICGCEGD (202 aa)) enclose the Glutamine amidotransferase type-1 domain. Catalysis depends on Cys-84, which acts as the Nucleophile. Catalysis depends on residues His-179 and Glu-181. The GMPS ATP-PPase domain occupies 206 to 398 (WNMPDYISEA…LGLPPQMVYR (193 aa)). 233-239 (SGGVDSL) is an ATP binding site.

As to quaternary structure, homodimer.

The catalysed reaction is XMP + L-glutamine + ATP + H2O = GMP + L-glutamate + AMP + diphosphate + 2 H(+). Its pathway is purine metabolism; GMP biosynthesis; GMP from XMP (L-Gln route): step 1/1. Its function is as follows. Catalyzes the synthesis of GMP from XMP. The protein is GMP synthase [glutamine-hydrolyzing] of Bordetella parapertussis (strain 12822 / ATCC BAA-587 / NCTC 13253).